We begin with the raw amino-acid sequence, 340 residues long: Thylakoidal processing peptidase 1, chloroplastic (340 aa).

The transit peptide at 1–52 directs the protein to the chloroplast; sequence MAIRITFTYSTHVARNLVGTRVGPGGYCFESLVRPRFFSHKRDFDRSPRNRP. Residues 155–175 form a helical membrane-spanning segment; it reads EDAKAAFTAVTVSILFRSALA. Topologically, residues 176–340 are lumenal, thylakoid; the sequence is EPKSIPSTSM…AITRGPVAVS (165 aa). S184 is a catalytic residue.

The protein belongs to the peptidase S26 family.

The protein localises to the plastid. It is found in the chloroplast thylakoid membrane. The enzyme catalyses Cleavage of hydrophobic, N-terminal signal or leader sequences from secreted and periplasmic proteins.. Its function is as follows. Cleaves the thylakoid-transfer domain from a chloroplast protein. The polypeptide is Thylakoidal processing peptidase 1, chloroplastic (TPP1) (Arabidopsis thaliana (Mouse-ear cress)).